The sequence spans 376 residues: Histidinol dehydrogenase (376 aa).

Residues Tyr100 and Asn182 each contribute to the NAD(+) site. Ser205, Gln227, and His230 together coordinate substrate. Residues Gln227 and His230 each contribute to the Zn(2+) site. Active-site proton acceptor residues include Glu275 and His276. 4 residues coordinate substrate: His276, Asp309, Glu363, and His368. Asp309 is a binding site for Zn(2+). His368 contributes to the Zn(2+) binding site.

This sequence belongs to the histidinol dehydrogenase family. Zn(2+) is required as a cofactor.

The catalysed reaction is L-histidinol + 2 NAD(+) + H2O = L-histidine + 2 NADH + 3 H(+). It participates in amino-acid biosynthesis; L-histidine biosynthesis; L-histidine from 5-phospho-alpha-D-ribose 1-diphosphate: step 9/9. Its function is as follows. Catalyzes the sequential NAD-dependent oxidations of L-histidinol to L-histidinaldehyde and then to L-histidine. The sequence is that of Histidinol dehydrogenase from Thermococcus kodakarensis (strain ATCC BAA-918 / JCM 12380 / KOD1) (Pyrococcus kodakaraensis (strain KOD1)).